A 371-amino-acid polypeptide reads, in one-letter code: UPF0284 protein tll2306 (371 aa).

The protein belongs to the UPF0284 family.

The chain is UPF0284 protein tll2306 from Thermosynechococcus vestitus (strain NIES-2133 / IAM M-273 / BP-1).